Reading from the N-terminus, the 960-residue chain is Putative helicase L207/L206 (960 aa).

Residues 1-32 form a disordered region; sequence MTSKTENKKSVSSKTGRTTNNSTNKKTTEKSV. A compositionally biased stretch (low complexity) spans 12-25; the sequence is SSKTGRTTNNSTNK. In terms of domain architecture, SF3 helicase spans 646 to 807; it reads SMREYILTLL…FIKHSEATKK (162 aa).

In Acanthamoeba polyphaga mimivirus (APMV), this protein is Putative helicase L207/L206.